A 199-amino-acid chain; its full sequence is MIQISDTAQTHFRKLIEREGAPGMGVRLSAVDPGTPRADARLEFAEPSDLLGDEWAVDCDGFTLYVDAASVGWLDGAEIDIVAGTAGAQQLTIKAPRIKGEAPGDAASLVERVHWVVENEINPQLASHGGKVAVQEVSAEGVVLLRFGGGCQGCGMADVTLKQGIEKTLMGRVPGVTAVRDATDHDSGHAPYIPRGNAA.

[4Fe-4S] cluster is bound by residues Cys-151 and Cys-154.

Belongs to the NfuA family. As to quaternary structure, homodimer. It depends on [4Fe-4S] cluster as a cofactor.

Its function is as follows. Involved in iron-sulfur cluster biogenesis. Binds a 4Fe-4S cluster, can transfer this cluster to apoproteins, and thereby intervenes in the maturation of Fe/S proteins. Could also act as a scaffold/chaperone for damaged Fe/S proteins. This Stenotrophomonas maltophilia (strain R551-3) protein is Fe/S biogenesis protein NfuA.